The sequence spans 587 residues: DNA ligase (587 aa).

Residues 32-36, 84-85, and D116 contribute to the NAD(+) site; these read DILYD and SL. K118 acts as the N6-AMP-lysine intermediate in catalysis. R139, E176, K293, and K317 together coordinate NAD(+). The Zn(2+) site is built by C411, C414, C429, and C435.

The protein belongs to the NAD-dependent DNA ligase family. LigA subfamily. It depends on Mg(2+) as a cofactor. The cofactor is Mn(2+).

The enzyme catalyses NAD(+) + (deoxyribonucleotide)n-3'-hydroxyl + 5'-phospho-(deoxyribonucleotide)m = (deoxyribonucleotide)n+m + AMP + beta-nicotinamide D-nucleotide.. Functionally, DNA ligase that catalyzes the formation of phosphodiester linkages between 5'-phosphoryl and 3'-hydroxyl groups in double-stranded DNA using NAD as a coenzyme and as the energy source for the reaction. It is essential for DNA replication and repair of damaged DNA. This Buchnera aphidicola subsp. Cinara cedri (strain Cc) protein is DNA ligase.